The following is a 213-amino-acid chain: Orotate phosphoribosyltransferase (213 aa).

Lys26 is a 5-phospho-alpha-D-ribose 1-diphosphate binding site. Phe34–Phe35 contributes to the orotate binding site. Residues Tyr72–Lys73, Arg99, Lys100, Lys103, His105, and Asp124–Ala132 each bind 5-phospho-alpha-D-ribose 1-diphosphate. Orotate contacts are provided by Thr128 and Arg156.

This sequence belongs to the purine/pyrimidine phosphoribosyltransferase family. PyrE subfamily. Homodimer. Requires Mg(2+) as cofactor.

It carries out the reaction orotidine 5'-phosphate + diphosphate = orotate + 5-phospho-alpha-D-ribose 1-diphosphate. The protein operates within pyrimidine metabolism; UMP biosynthesis via de novo pathway; UMP from orotate: step 1/2. Catalyzes the transfer of a ribosyl phosphate group from 5-phosphoribose 1-diphosphate to orotate, leading to the formation of orotidine monophosphate (OMP). This is Orotate phosphoribosyltransferase from Vibrio parahaemolyticus serotype O3:K6 (strain RIMD 2210633).